The chain runs to 1073 residues: Transmembrane protein 132E (1073 aa).

A signal peptide spans 1-33 (MGHFVVQGDLPWILCSLRLVIMIIAGKVSPTSS). At 34–899 (DALFSVPVPS…MTDLEIGMYA (866 aa)) the chain is on the extracellular side. Residue N102 is glycosylated (N-linked (GlcNAc...) asparagine). The tract at residues 246-270 (DPDSNDECGESYPRRGGPSRGESLS) is disordered. N-linked (GlcNAc...) asparagine glycosylation is found at N324, N396, and N746. Residues 900–920 (LLGVFCLAILVFLINCIVFVL) form a helical membrane-spanning segment. Residues 921 to 1073 (KYRHKRIPPE…DYMRRIKEIA (153 aa)) lie on the Cytoplasmic side of the membrane. Over residues 952-970 (TQSDLSPQTVESPSNTLEG) the composition is skewed to polar residues. Residues 952–1024 (TQSDLSPQTV…PTSKRKRVKF (73 aa)) form a disordered region. The span at 982–994 (SGSSQTSVQSQVH) shows a compositional bias: low complexity.

It belongs to the TMEM132 family.

It is found in the membrane. Functionally, required for normal inner ear hair cell function and hearing. This chain is Transmembrane protein 132E (tmem132e), found in Danio rerio (Zebrafish).